A 132-amino-acid chain; its full sequence is MPRRATRRFLPRKTKHRILKGVIYVRASFRNTIVTVTDTRGQAVSWSSAGACGFKGTKRRSPFAAQTAAANVVDTLVNQGLLKEAEVMISGPGPGRDTALRAIAQSGIQLSYVRDVTPMPHNGCRPPKRRRV.

It belongs to the universal ribosomal protein uS11 family. As to quaternary structure, part of the 30S ribosomal subunit.

Its subcellular location is the plastid. It is found in the chloroplast. This Cryptomeria japonica (Japanese cedar) protein is Small ribosomal subunit protein uS11c.